Reading from the N-terminus, the 150-residue chain is Cytochrome b5 type B (150 aa).

Positions 1 to 15 are excised as a propeptide; that stretch reads MSGSMATAEASGSDG. The segment at 1–20 is disordered; the sequence is MSGSMATAEASGSDGKGQEV. Residue Ser-23 is modified to Phosphoserine. Residues 24-100 enclose the Cytochrome b5 heme-binding domain; that stretch reads VTYYRLEEVA…LKQYYIGDIH (77 aa). N6-acetyllysine is present on Lys-34. Residue Ser-37 is modified to Phosphoserine. Lys-39 carries the post-translational modification N6-methyllysine. Heme is bound by residues His-59 and His-83. At Ser-84 the chain carries Phosphoserine. A helical transmembrane segment spans residues 123-140; that stretch reads WAYWILPIIGAVLLGFLY.

Belongs to the cytochrome b5 family. Component of a complex composed of cytochrome b5, NADH-cytochrome b5 reductase (CYB5R3) and MTARC2.

Its subcellular location is the mitochondrion outer membrane. Functionally, cytochrome b5 is a membrane-bound hemoprotein functioning as an electron carrier for several membrane-bound oxygenases. This Homo sapiens (Human) protein is Cytochrome b5 type B (CYB5B).